Consider the following 391-residue polypeptide: 23S rRNA (uracil(747)-C(5))-methyltransferase RlmC (391 aa).

Residues Cys5, Cys13, Cys16, and Cys95 each coordinate [4Fe-4S] cluster. S-adenosyl-L-methionine is bound by residues Gln220, Phe249, Glu276, and Asn322. The active-site Nucleophile is the Cys349.

It belongs to the class I-like SAM-binding methyltransferase superfamily. RNA M5U methyltransferase family. RlmC subfamily.

The catalysed reaction is uridine(747) in 23S rRNA + S-adenosyl-L-methionine = 5-methyluridine(747) in 23S rRNA + S-adenosyl-L-homocysteine + H(+). Catalyzes the formation of 5-methyl-uridine at position 747 (m5U747) in 23S rRNA. This chain is 23S rRNA (uracil(747)-C(5))-methyltransferase RlmC, found in Actinobacillus pleuropneumoniae serotype 3 (strain JL03).